Reading from the N-terminus, the 463-residue chain is ATP synthase subunit beta (463 aa).

153 to 160 (GGAGVGKT) is an ATP binding site.

The protein belongs to the ATPase alpha/beta chains family. As to quaternary structure, F-type ATPases have 2 components, CF(1) - the catalytic core - and CF(0) - the membrane proton channel. CF(1) has five subunits: alpha(3), beta(3), gamma(1), delta(1), epsilon(1). CF(0) has three main subunits: a(1), b(2) and c(9-12). The alpha and beta chains form an alternating ring which encloses part of the gamma chain. CF(1) is attached to CF(0) by a central stalk formed by the gamma and epsilon chains, while a peripheral stalk is formed by the delta and b chains.

The protein resides in the cell inner membrane. It carries out the reaction ATP + H2O + 4 H(+)(in) = ADP + phosphate + 5 H(+)(out). Its function is as follows. Produces ATP from ADP in the presence of a proton gradient across the membrane. The catalytic sites are hosted primarily by the beta subunits. The sequence is that of ATP synthase subunit beta from Burkholderia cepacia (Pseudomonas cepacia).